Here is a 494-residue protein sequence, read N- to C-terminus: MGSTSSLYAAIDLGSNSFHMLVVREVAGSIQTLTRIKRKVRLAAGLNSENALSNEAMERGWQCLRLFAERLQDIPPSQIRVVATATLRLAVNAGDFIAKAQEILGCPVQVISGEEEARLIYQGVAHTTGGADQRLVVDIGGASTELVTGTGAQTTSLFSLSMGCVTWLERYFADRNLGQENFDAAEKAAREVLRPVADELRYHGWKVCVGASGTVQALQEIMMAQGMDERITLEKLQQLKQRAIHCGRLEELEIDGLTLERALVFPSGLAILIAIFTELNIQCMTLAGGALREGLVYGMLHLAVEQDIRSRTLRNIQRRFMIDIDQAQRVAKVAANFFDQVENEWHLEAISRDLLISACQLHEIGLSVDFKQAPQHAAYLVRNLDLPGFTPAQKKLLATLLLNQTNPVDLSSLHQQNAVPPRVAEQLCRLLRLAIIFASRRRDDLVPEMTLQANHELLTLTLPQGWLTQHPLGKEIIAQESQWQSYVHWPLEVH.

It belongs to the GppA/Ppx family. GppA subfamily.

It catalyses the reaction guanosine 3'-diphosphate 5'-triphosphate + H2O = guanosine 3',5'-bis(diphosphate) + phosphate + H(+). It participates in purine metabolism; ppGpp biosynthesis; ppGpp from GTP: step 2/2. Functionally, catalyzes the conversion of pppGpp to ppGpp. Guanosine pentaphosphate (pppGpp) is a cytoplasmic signaling molecule which together with ppGpp controls the 'stringent response', an adaptive process that allows bacteria to respond to amino acid starvation, resulting in the coordinated regulation of numerous cellular activities. The chain is Guanosine-5'-triphosphate,3'-diphosphate pyrophosphatase from Escherichia coli O157:H7.